Consider the following 503-residue polypeptide: Nuclear respiratory factor 1 (503 aa).

Positions 1-78 (MEEHGVTQTE…AHLAAAGPVG (78 aa)) are dimerization. Residues 36 to 57 (SMLSADEDSPSSPEDTSYDDSD) are disordered. Phosphoserine; by CK2 is present on residues S39, S44, S46, S47, and S52. Residues 88–116 (GKKRKRPHVFESNPSIRKRQQTRLLRKLR) carry the Nuclear localization signal motif. Residues 109–305 (TRLLRKLRAT…SIAHLVPSQT (197 aa)) mediate DNA binding. K139 is covalently cross-linked (Glycyl lysine isopeptide (Lys-Gly) (interchain with G-Cter in SUMO2)). The required for transcriptional activation stretch occupies residues 301-476 (VPSQTVVQTF…AQGNGPVQVA (176 aa)).

This sequence belongs to the NRF1/Ewg family. As to quaternary structure, homodimer. Binds DNA as a dimer. Interacts with PPRC1. Post-translationally, phosphorylation enhances DNA binding. Ubiquitously expressed with strongest expression in skeletal muscle.

The protein localises to the nucleus. Transcription factor that activates the expression of the EIF2S1 (EIF2-alpha) gene. Links the transcriptional modulation of key metabolic genes to cellular growth and development. Implicated in the control of nuclear genes required for respiration, heme biosynthesis, and mitochondrial DNA transcription and replication. This Homo sapiens (Human) protein is Nuclear respiratory factor 1 (NRF1).